Reading from the N-terminus, the 516-residue chain is Probable cyclic di-GMP phosphodiesterase PdeB (516 aa).

2 helical membrane-spanning segments follow: residues Leu6–Ile26 and Gln242–Leu262. The EAL domain maps to Ile268–Leu516.

It is found in the cell inner membrane. The enzyme catalyses 3',3'-c-di-GMP + H2O = 5'-phosphoguanylyl(3'-&gt;5')guanosine + H(+). Its function is as follows. Phosphodiesterase (PDE) that catalyzes the hydrolysis of cyclic-di-GMP (c-di-GMP) to 5'-pGpG. The polypeptide is Probable cyclic di-GMP phosphodiesterase PdeB (Escherichia coli (strain K12)).